Consider the following 90-residue polypeptide: CRISPR-associated endonuclease Cas2 2 (90 aa).

Mg(2+) is bound at residue Asp-11.

The protein belongs to the CRISPR-associated endoribonuclease Cas2 protein family. Homodimer, forms a heterotetramer with a Cas1 homodimer. Mn(2+) serves as cofactor. Mg(2+) is required as a cofactor.

Inhibited by EDTA and at pH 6.0. Functionally, CRISPR (clustered regularly interspaced short palindromic repeat), is an adaptive immune system that provides protection against mobile genetic elements (viruses, transposable elements and conjugative plasmids). CRISPR clusters contain sequences complementary to antecedent mobile elements and target invading nucleic acids. CRISPR clusters are transcribed and processed into CRISPR RNA (crRNA). Involved in the integration of spacer DNA into the CRISPR cassette. Functions as a dsDNA endonuclease and as a weak ssRNase. In Thermus thermophilus (strain ATCC BAA-163 / DSM 7039 / HB27), this protein is CRISPR-associated endonuclease Cas2 2 (cas2b).